The chain runs to 414 residues: MFPGAVIRKLAFSEEIYARYQAFTSFTAHVRGPVDIDAMSEAFDALLQAHPVFAAHLEEGPDGNHHIVANDLLHSGLVVIDGRRAENPHVQLDQRDSLFRLQLTLGESENLVTAYVHHSLADAHHLGSLLDELLSRYTDVVTTGDPGPITPEPAPQPAEDLLKRRGIKQSALTGFERFLPLLFAYDLPPIAEEMRKFEAPEPVPVTRCRLTSQETADLVSFSRDNGLSFNAVLAAAILLAEWRLRETPHVPIPYCYAVDLRFLLSPPVGATESTNPVGLATYLAEIGPDTDITELAADIVATFRADLSDGMIHQSALRSGRILEGTPPGLPPFILCTNVSTLPPIRTPEDVELVDFHSRIHCAMDVPFGFYACSIATDRLSIELHGSIPAPQLLLDAIRDILCSVPSEYGLFME.

Catalysis depends on His118, which acts as the Proton acceptor.

Belongs to the acyltransferase PapA5 family. As to quaternary structure, monomer. Interacts directly with the acyl carrier protein (ACP) domain of the mycocerosic acid synthase (mas) protein.

It catalyses the reaction 2 a mycocerosyl-[mycocerosic acid synthase] + a phthiocerol = a dimycocerosyl phthiocerol + 2 holo-[mycocerosic acid synthase].. The enzyme catalyses 2 a mycocerosyl-[mycocerosic acid synthase] + a phthiodiolone = a dimycocerosyl phthiodiolone + 2 holo-[mycocerosic acid synthase].. It carries out the reaction 2 a mycocerosyl-[mycocerosic acid synthase] + a phenolphthiocerol = a dimycocerosyl phenolphthiocerol + 2 holo-[mycocerosic acid synthase].. In terms of biological role, catalyzes diesterification of phthiocerol, phthiodiolone, and phenolphthiocerol with mycocerosic acids, the final step in the phthiocerol, phthiodiolone and phenolphthiocerol dimycocerosate esters (PDIM) synthesis. Can directly transfer the mycocerosate bound to the mycocerosic acid synthase (mas) onto the substrate alcohols. The polypeptide is Phthiocerol/phthiodiolone dimycocerosyl transferase (papA5) (Mycobacterium ulcerans (strain Agy99)).